The following is a 232-amino-acid chain: Large ribosomal subunit protein uL1 (232 aa).

The protein belongs to the universal ribosomal protein uL1 family. Part of the 50S ribosomal subunit.

Functionally, binds directly to 23S rRNA. The L1 stalk is quite mobile in the ribosome, and is involved in E site tRNA release. Its function is as follows. Protein L1 is also a translational repressor protein, it controls the translation of the L11 operon by binding to its mRNA. This Aromatoleum aromaticum (strain DSM 19018 / LMG 30748 / EbN1) (Azoarcus sp. (strain EbN1)) protein is Large ribosomal subunit protein uL1.